Reading from the N-terminus, the 224-residue chain is GTP-binding protein RHO3 (224 aa).

22-29 is a GTP binding site; that stretch reads GDGACGKT. The Effector region signature appears at 44-52; that stretch reads YEPTVFENY. GTP contacts are provided by residues 69 to 73 and 127 to 130; these read DTAGQ and LKCD. The interval 205-224 is disordered; sequence TPKGARDSAPEAESSSCTIM. C221 is modified (cysteine methyl ester). Residue C221 is the site of S-geranylgeranyl cysteine attachment. Residues 222–224 constitute a propeptide, removed in mature form; it reads TIM.

Belongs to the small GTPase superfamily. Rho family.

The protein resides in the cell membrane. Its function is as follows. Involved in the regulation of actin polarization. Rho proteins are required for distinct steps during polarized hyphal growth of A.gossypii. In Eremothecium gossypii (strain ATCC 10895 / CBS 109.51 / FGSC 9923 / NRRL Y-1056) (Yeast), this protein is GTP-binding protein RHO3 (RHO3).